Here is a 476-residue protein sequence, read N- to C-terminus: MKDTFVEKVDDFVKQHDVLKNDSTIVVGVSGGPDSLALLYYLLEKRAEKQLEIVVAHVDHMFRGDESYEDLQFVQGLCEELGIICETIRINVSQYQQQYGMNAQVAARECRYAFLERIMKKYDARYVALGHHGDDQVETILMRLVRGSTPKGYAGIAVKRPFHNGYLIRPLLGVTKEEIVDYCNKLNLMPRIDPSNKKEVYTRNRLRKYVLPHLKEENPQMHEKFQKFSVQMQEDEAYLQELAFEKMNKVITKKSDKQISLSIPAFESMSMPLQRRGIQLILNYLYEYKIPSSLSSIHIDKLIEFFKRTQPSGSLDFPGDLKIVRSYEECSFRFKQEIVSPFSQDLLVPGTITLLNGDKFVTEVSEDIPSNMNETVFVAKYNDISYPLRIRSRENGDRMSIQGMNGTKKIKAIFIEAKVPKEKREEWPVVCDASGTIIWVPLLKRSAFAISKEMAKKDKYMIIHYKSKESSGRIMK.

Position 30 to 35 (30 to 35 (SGGPDS)) interacts with ATP.

The protein belongs to the tRNA(Ile)-lysidine synthase family.

Its subcellular location is the cytoplasm. It carries out the reaction cytidine(34) in tRNA(Ile2) + L-lysine + ATP = lysidine(34) in tRNA(Ile2) + AMP + diphosphate + H(+). Its function is as follows. Ligates lysine onto the cytidine present at position 34 of the AUA codon-specific tRNA(Ile) that contains the anticodon CAU, in an ATP-dependent manner. Cytidine is converted to lysidine, thus changing the amino acid specificity of the tRNA from methionine to isoleucine. The chain is tRNA(Ile)-lysidine synthase from Bacillus cereus (strain ATCC 14579 / DSM 31 / CCUG 7414 / JCM 2152 / NBRC 15305 / NCIMB 9373 / NCTC 2599 / NRRL B-3711).